The chain runs to 1400 residues: S phase cyclin A-associated protein in the endoplasmic reticulum (1400 aa).

Disordered regions lie at residues 36–61, 226–277, 517–550, and 701–723; these read ESKD…GTHK, VKAH…IRSR, PARP…HEEK, and RIEQ…RARD. The span at 231–243 shows a compositional bias: polar residues; it reads TGSTASSEITPAQ. Basic and acidic residues predominate over residues 539–550; that stretch reads TIAESKKKHEEK. The segment at 792–816 adopts a C2H2-type zinc-finger fold; sequence KQCSLCNVLISSEVYLFSHVKGRKH. The residue at position 832 (S832) is a Phosphoserine.

In terms of assembly, interacts with CCNA2/CDK2 complex, but not with CCNA2/CDC2, CCNB1/CDC2 or CCNE1/CDK2 complexes, at multiple phases of the cell cycle, including S and G2/M. In terms of processing, phosphorylated in vitro by the CCNA2/CDK2 complex. In terms of tissue distribution, widely expressed with high expression in testis. Isoform 1 is detected in various tissues, including retina, fetal and adult brain. Isoform 2 is expressed in the retina at high levels, and in the brain at very low levels.

It is found in the endoplasmic reticulum. Its subcellular location is the nucleus. CCNA2/CDK2 regulatory protein that transiently maintains CCNA2 in the cytoplasm. This chain is S phase cyclin A-associated protein in the endoplasmic reticulum, found in Homo sapiens (Human).